Reading from the N-terminus, the 335-residue chain is Biotin synthase (335 aa).

The Radical SAM core domain occupies 43–269; it reads YFGKKVKLNM…INPTKEIRIA (227 aa). Residues C61, C65, and C68 each contribute to the [4Fe-4S] cluster site. The [2Fe-2S] cluster site is built by C104, C137, C197, and R267.

It belongs to the radical SAM superfamily. Biotin synthase family. Homodimer. [4Fe-4S] cluster serves as cofactor. Requires [2Fe-2S] cluster as cofactor.

The enzyme catalyses (4R,5S)-dethiobiotin + (sulfur carrier)-SH + 2 reduced [2Fe-2S]-[ferredoxin] + 2 S-adenosyl-L-methionine = (sulfur carrier)-H + biotin + 2 5'-deoxyadenosine + 2 L-methionine + 2 oxidized [2Fe-2S]-[ferredoxin]. It functions in the pathway cofactor biosynthesis; biotin biosynthesis; biotin from 7,8-diaminononanoate: step 2/2. In terms of biological role, catalyzes the conversion of dethiobiotin (DTB) to biotin by the insertion of a sulfur atom into dethiobiotin via a radical-based mechanism. The polypeptide is Biotin synthase (Staphylococcus aureus (strain USA300)).